Here is a 303-residue protein sequence, read N- to C-terminus: Coenzyme PQQ synthesis protein B (303 aa).

It belongs to the PqqB family.

It participates in cofactor biosynthesis; pyrroloquinoline quinone biosynthesis. Functionally, may be involved in the transport of PQQ or its precursor to the periplasm. The polypeptide is Coenzyme PQQ synthesis protein B (Pseudomonas savastanoi pv. phaseolicola (strain 1448A / Race 6) (Pseudomonas syringae pv. phaseolicola (strain 1448A / Race 6))).